The following is a 598-amino-acid chain: Elongation factor 4 (598 aa).

A tr-type G domain is found at 5 to 187; sequence ANIRNFSIIA…ALVEFIPAPT (183 aa). GTP contacts are provided by residues 17 to 22 and 134 to 137; these read DHGKST and NKID.

This sequence belongs to the TRAFAC class translation factor GTPase superfamily. Classic translation factor GTPase family. LepA subfamily.

The protein resides in the cell inner membrane. It catalyses the reaction GTP + H2O = GDP + phosphate + H(+). Functionally, required for accurate and efficient protein synthesis under certain stress conditions. May act as a fidelity factor of the translation reaction, by catalyzing a one-codon backward translocation of tRNAs on improperly translocated ribosomes. Back-translocation proceeds from a post-translocation (POST) complex to a pre-translocation (PRE) complex, thus giving elongation factor G a second chance to translocate the tRNAs correctly. Binds to ribosomes in a GTP-dependent manner. The chain is Elongation factor 4 from Psychrobacter arcticus (strain DSM 17307 / VKM B-2377 / 273-4).